Consider the following 194-residue polypeptide: Adenylate kinase isoenzyme 1 (194 aa).

19–24 (GSGKGT) serves as a coordination point for ATP. The NMP stretch occupies residues 39 to 68 (STGDLLRAEVSSGSERGKKLQAIMEKGELV). AMP contacts are provided by residues Thr-40, Arg-45, 66–68 (ELV), 95–98 (GYPR), and Gln-102. The LID stretch occupies residues 132 to 142 (KRGETSGRVDD). Position 133 (Arg-133) interacts with ATP. Arg-139 and Arg-150 together coordinate AMP. Gly-178 serves as a coordination point for ATP.

The protein belongs to the adenylate kinase family. AK1 subfamily. As to quaternary structure, monomer. The cofactor is Mg(2+). In terms of tissue distribution, skeletal muscle.

The protein resides in the cytoplasm. The catalysed reaction is a ribonucleoside 5'-phosphate + ATP = a ribonucleoside 5'-diphosphate + ADP. It catalyses the reaction AMP + ATP = 2 ADP. It carries out the reaction dAMP + ATP = dADP + ADP. The enzyme catalyses dATP + AMP = dADP + ADP. The catalysed reaction is dAMP + dATP = 2 dADP. It catalyses the reaction a 2'-deoxyribonucleoside 5'-diphosphate + ATP = a 2'-deoxyribonucleoside 5'-triphosphate + ADP. It carries out the reaction a ribonucleoside 5'-diphosphate + ATP = a ribonucleoside 5'-triphosphate + ADP. The enzyme catalyses CDP + GTP = CTP + GDP. The catalysed reaction is GDP + ATP = GTP + ADP. It catalyses the reaction UDP + ATP = UTP + ADP. It carries out the reaction GTP + UDP = UTP + GDP. The enzyme catalyses dTDP + GTP = dTTP + GDP. The catalysed reaction is dCDP + GTP = dCTP + GDP. It catalyses the reaction dGDP + ATP = dGTP + ADP. It carries out the reaction dADP + GTP = dATP + GDP. The enzyme catalyses thiamine diphosphate + ADP = thiamine triphosphate + AMP. In terms of biological role, catalyzes the reversible transfer of the terminal phosphate group between ATP and AMP. Also displays broad nucleoside diphosphate kinase activity. Plays an important role in cellular energy homeostasis and in adenine nucleotide metabolism. Also catalyzes at a very low rate the synthesis of thiamine triphosphate (ThTP) from thiamine diphosphate (ThDP) and ADP. The polypeptide is Adenylate kinase isoenzyme 1 (Gallus gallus (Chicken)).